Consider the following 354-residue polypeptide: Phospho-N-acetylmuramoyl-pentapeptide-transferase (354 aa).

10 consecutive transmembrane segments (helical) span residues 23 to 43 (IAFF…IAWA), 66 to 86 (TPTM…LLCS), 88 to 108 (LTNT…FIGF), 138 to 158 (FALS…FIPF), 161 to 181 (YALF…ITAS), 193 to 213 (GLAS…VYLC), 227 to 247 (VVGV…ILGF), 257 to 277 (VFMG…TGVV), 282 to 302 (ILLI…ILQV), and 331 to 351 (KIIV…LTTL).

The protein belongs to the glycosyltransferase 4 family. MraY subfamily. Mg(2+) serves as cofactor.

Its subcellular location is the cell inner membrane. The catalysed reaction is UDP-N-acetyl-alpha-D-muramoyl-L-alanyl-gamma-D-glutamyl-meso-2,6-diaminopimeloyl-D-alanyl-D-alanine + di-trans,octa-cis-undecaprenyl phosphate = di-trans,octa-cis-undecaprenyl diphospho-N-acetyl-alpha-D-muramoyl-L-alanyl-D-glutamyl-meso-2,6-diaminopimeloyl-D-alanyl-D-alanine + UMP. Its pathway is cell wall biogenesis; peptidoglycan biosynthesis. Functionally, catalyzes the initial step of the lipid cycle reactions in the biosynthesis of the cell wall peptidoglycan: transfers peptidoglycan precursor phospho-MurNAc-pentapeptide from UDP-MurNAc-pentapeptide onto the lipid carrier undecaprenyl phosphate, yielding undecaprenyl-pyrophosphoryl-MurNAc-pentapeptide, known as lipid I. In Campylobacter hominis (strain ATCC BAA-381 / DSM 21671 / CCUG 45161 / LMG 19568 / NCTC 13146 / CH001A), this protein is Phospho-N-acetylmuramoyl-pentapeptide-transferase.